The sequence spans 779 residues: Phosphoribosylformylglycinamidine synthase subunit PurL (779 aa).

Residue H52 is part of the active site. ATP is bound by residues Y55 and K94. E96 contributes to the Mg(2+) binding site. Residues 97-100 (SHNH) and R119 contribute to the substrate site. H98 (proton acceptor) is an active-site residue. D120 serves as a coordination point for Mg(2+). Q243 is a substrate binding site. Mg(2+) is bound at residue D271. Residue 315-317 (ESQ) coordinates substrate. ATP is bound by residues N523 and G560. Residue N561 coordinates Mg(2+). S563 provides a ligand contact to substrate.

This sequence belongs to the FGAMS family. Monomer. Part of the FGAM synthase complex composed of 1 PurL, 1 PurQ and 2 PurS subunits.

Its subcellular location is the cytoplasm. It catalyses the reaction N(2)-formyl-N(1)-(5-phospho-beta-D-ribosyl)glycinamide + L-glutamine + ATP + H2O = 2-formamido-N(1)-(5-O-phospho-beta-D-ribosyl)acetamidine + L-glutamate + ADP + phosphate + H(+). Its pathway is purine metabolism; IMP biosynthesis via de novo pathway; 5-amino-1-(5-phospho-D-ribosyl)imidazole from N(2)-formyl-N(1)-(5-phospho-D-ribosyl)glycinamide: step 1/2. Functionally, part of the phosphoribosylformylglycinamidine synthase complex involved in the purines biosynthetic pathway. Catalyzes the ATP-dependent conversion of formylglycinamide ribonucleotide (FGAR) and glutamine to yield formylglycinamidine ribonucleotide (FGAM) and glutamate. The FGAM synthase complex is composed of three subunits. PurQ produces an ammonia molecule by converting glutamine to glutamate. PurL transfers the ammonia molecule to FGAR to form FGAM in an ATP-dependent manner. PurS interacts with PurQ and PurL and is thought to assist in the transfer of the ammonia molecule from PurQ to PurL. The polypeptide is Phosphoribosylformylglycinamidine synthase subunit PurL (Prochlorococcus marinus (strain MIT 9215)).